A 384-amino-acid chain; its full sequence is Tetraacyldisaccharide 4'-kinase (384 aa).

ATP is bound at residue 72–79 (TAGGTGKT).

The protein belongs to the LpxK family.

The enzyme catalyses a lipid A disaccharide + ATP = a lipid IVA + ADP + H(+). It functions in the pathway glycolipid biosynthesis; lipid IV(A) biosynthesis; lipid IV(A) from (3R)-3-hydroxytetradecanoyl-[acyl-carrier-protein] and UDP-N-acetyl-alpha-D-glucosamine: step 6/6. In terms of biological role, transfers the gamma-phosphate of ATP to the 4'-position of a tetraacyldisaccharide 1-phosphate intermediate (termed DS-1-P) to form tetraacyldisaccharide 1,4'-bis-phosphate (lipid IVA). The chain is Tetraacyldisaccharide 4'-kinase from Halothermothrix orenii (strain H 168 / OCM 544 / DSM 9562).